The following is a 303-amino-acid chain: Proline dehydrogenase 2 (303 aa).

Lysine 96 serves as a coordination point for substrate. Residue aspartate 130 is part of the active site. The FAD site is built by methionine 131 and glutamine 159. Arginine 180 is an active-site residue. Residues 183 to 185 (KGA) and 222 to 223 (TH) contribute to the FAD site. Residue 284 to 285 (RR) coordinates substrate.

This sequence belongs to the proline dehydrogenase family. It depends on FAD as a cofactor.

The catalysed reaction is L-proline + a quinone = (S)-1-pyrroline-5-carboxylate + a quinol + H(+). It functions in the pathway amino-acid degradation; L-proline degradation into L-glutamate; L-glutamate from L-proline: step 1/2. Converts proline to delta-1-pyrroline-5-carboxylate. Important for the use of proline as a sole carbon and energy source or a sole nitrogen source. The chain is Proline dehydrogenase 2 from Bacillus subtilis (strain 168).